We begin with the raw amino-acid sequence, 605 residues long: UPF0313 protein GSU2873 (605 aa).

The Radical SAM core domain occupies 291 to 561 (AYEQIRASVT…LQKALLLWHL (271 aa)). [4Fe-4S] cluster-binding residues include C305, C309, and C312. A disordered region spans residues 586 to 605 (GGAAGGGGGRSGSGFRPGRT). Residues 587–597 (GAAGGGGGRSG) are compositionally biased toward gly residues.

It belongs to the UPF0313 family. [4Fe-4S] cluster serves as cofactor.

The chain is UPF0313 protein GSU2873 from Geobacter sulfurreducens (strain ATCC 51573 / DSM 12127 / PCA).